Reading from the N-terminus, the 246-residue chain is Probable aquaporin AqpM (246 aa).

Residues 1-12 (MTMTLAKRFTAE) are Cytoplasmic-facing. Residues 13–33 (VVGTFILVFFGPGAAVITLMI) form a helical membrane-spanning segment. Topologically, residues 34-56 (ANGADKPNEFNIGIGALGGLGDW) are extracellular. A helical transmembrane segment spans residues 57 to 77 (FAIGMAFALAIAAVIYSLGRI). Residues 78-104 (SGAHINPAVTIALWSIGRFPGREVVPY) lie on the Cytoplasmic side of the membrane. The NPA 1 signature appears at 83–85 (NPA). Residues 105–125 (IVAQFIGAALGSLLFLACVGP) form a helical membrane-spanning segment. The Extracellular segment spans residues 126–146 (AAATVGGLGATAPFPGIGYGQ). The helical transmembrane segment at 147–167 (AILTEAIGTFLLMLVIMGVAV) threads the bilayer. The Cytoplasmic portion of the chain corresponds to 168-173 (DERAPP). A helical membrane pass occupies residues 174–194 (GFAGLVIGLTVGGIITTIGNI). At 195–217 (TGSSLNPARTFGPYLGDSLMGIN) the chain is on the extracellular side. The NPA 2 signature appears at 200–202 (NPA). Residues 218 to 238 (LWQYFPIYVIGPIVGAVAAAW) form a helical membrane-spanning segment. Residues 239-246 (LYNYLAKE) lie on the Cytoplasmic side of the membrane.

The protein belongs to the MIP/aquaporin (TC 1.A.8) family.

It is found in the cell membrane. In terms of biological role, channel that permits osmotically driven movement of water in both directions. The polypeptide is Probable aquaporin AqpM (aqpM) (Archaeoglobus fulgidus (strain ATCC 49558 / DSM 4304 / JCM 9628 / NBRC 100126 / VC-16)).